Reading from the N-terminus, the 352-residue chain is Ion-translocating oxidoreductase complex subunit D (352 aa).

Helical transmembrane passes span 20-40 (IMLL…WFFG), 42-62 (GTLV…ALVL), 89-109 (IPPL…VIIA), and 123-143 (PAMI…TSWL). An FMN phosphoryl threonine modification is found at Thr187. 5 consecutive transmembrane segments (helical) span residues 214–234 (ILAG…GLWL), 242–262 (WHIP…GWLF), 267–287 (LAAP…FFIL), 301–321 (LIFG…GGYP), and 322–342 (DGVA…DYYT).

It belongs to the NqrB/RnfD family. As to quaternary structure, the complex is composed of six subunits: RsxA, RsxB, RsxC, RsxD, RsxE and RsxG. FMN is required as a cofactor.

It is found in the cell inner membrane. Functionally, part of a membrane-bound complex that couples electron transfer with translocation of ions across the membrane. Required to maintain the reduced state of SoxR. This chain is Ion-translocating oxidoreductase complex subunit D, found in Shigella sonnei (strain Ss046).